A 446-amino-acid chain; its full sequence is UDP-N-acetylglucosamine--dolichyl-phosphate N-acetylglucosaminephosphotransferase (446 aa).

The next 2 membrane-spanning stretches (helical) occupy residues 1 to 21 (MIESCFNVGIWATGLALLMNQ) and 25 to 45 (PLLSNVGLSVLAYKATAMFIP). Residues 59–61 (KDM) and E71 contribute to the UDP-N-acetyl-alpha-D-glucosamine site. The next 2 helical transmembrane spans lie at 73–93 (MGAVSALVYFMCMIIFIPVLF) and 123–143 (LLGAYLSALLSILSVSLLGIL). K154 serves as a coordination point for dolichyl phosphate. 2 consecutive transmembrane segments (helical) span residues 155–175 (FFLPAIAAIPLLVVYYVDYGV) and 191–211 (SLINLGFLYYFYMAAVAIFCP). 208-216 (IFCPNSINI) contributes to the dolichyl phosphate binding site. N215 serves as a coordination point for Mg(2+). A run of 4 helical transmembrane segments spans residues 216–236 (IIAGVNGVEAGQSLVLALVIA), 254–274 (AHLLSLYLVLPLIGVTAGLLK), 282–302 (VFVGDTFCYFAGMVMAVVGIL), and 311–331 (LFFIPQIFNFALSVPQLFGLV). N221 contributes to the UDP-N-acetyl-alpha-D-glucosamine binding site. Residue D286 coordinates Mg(2+). Residue 335–337 (RHR) participates in UDP-N-acetyl-alpha-D-glucosamine binding. A glycan (N-linked (GlcNAc...) asparagine) is linked at N395. A helical transmembrane segment spans residues 412 to 432 (DHLTICIMGLQLLTGIFGLII).

The protein belongs to the glycosyltransferase 4 family. Mg(2+) serves as cofactor.

It localises to the endoplasmic reticulum membrane. The enzyme catalyses a di-trans,poly-cis-dolichyl phosphate + UDP-N-acetyl-alpha-D-glucosamine = an N-acetyl-alpha-D-glucosaminyl-diphospho-di-trans,poly-cis-dolichol + UMP. It functions in the pathway protein modification; protein glycosylation. Inhibited by natural nucleoside antibiotic tunicamycin, which acts as a structural analog and competitor of UDP-GlcNAc. UDP-N-acetylglucosamine--dolichyl-phosphate N-acetylglucosaminephosphotransferase that operates in the biosynthetic pathway of dolichol-linked oligosaccharides, the glycan precursors employed in protein asparagine (N)-glycosylation. The assembly of dolichol-linked oligosaccharides begins on the cytosolic side of the endoplasmic reticulum membrane and finishes in its lumen. The sequential addition of sugars to dolichol pyrophosphate produces dolichol-linked oligosaccharides containing fourteen sugars, including two GlcNAcs, nine mannoses and three glucoses. Once assembled, the oligosaccharide is transferred from the lipid to nascent proteins by oligosaccharyltransferases. Catalyzes the initial step of dolichol-linked oligosaccharide biosynthesis, transfering GlcNAc-1-P from cytosolic UDP-GlcNAc onto the carrier lipid dolichyl phosphate (P-dolichol), yielding GlcNAc-P-P-dolichol embedded in the cytoplasmic leaflet of the endoplasmic reticulum membrane. This Schizosaccharomyces pombe (strain 972 / ATCC 24843) (Fission yeast) protein is UDP-N-acetylglucosamine--dolichyl-phosphate N-acetylglucosaminephosphotransferase (gpt2).